A 343-amino-acid polypeptide reads, in one-letter code: UDP-N-acetylglucosamine--N-acetylmuramyl-(pentapeptide) pyrophosphoryl-undecaprenol N-acetylglucosamine transferase (343 aa).

Residues 10–12, N113, S174, and Q275 contribute to the UDP-N-acetyl-alpha-D-glucosamine site; that span reads TGG.

This sequence belongs to the glycosyltransferase 28 family. MurG subfamily.

The protein resides in the cell membrane. It carries out the reaction di-trans,octa-cis-undecaprenyl diphospho-N-acetyl-alpha-D-muramoyl-L-alanyl-D-glutamyl-meso-2,6-diaminopimeloyl-D-alanyl-D-alanine + UDP-N-acetyl-alpha-D-glucosamine = di-trans,octa-cis-undecaprenyl diphospho-[N-acetyl-alpha-D-glucosaminyl-(1-&gt;4)]-N-acetyl-alpha-D-muramoyl-L-alanyl-D-glutamyl-meso-2,6-diaminopimeloyl-D-alanyl-D-alanine + UDP + H(+). It functions in the pathway cell wall biogenesis; peptidoglycan biosynthesis. Its function is as follows. Cell wall formation. Catalyzes the transfer of a GlcNAc subunit on undecaprenyl-pyrophosphoryl-MurNAc-pentapeptide (lipid intermediate I) to form undecaprenyl-pyrophosphoryl-MurNAc-(pentapeptide)GlcNAc (lipid intermediate II). The chain is UDP-N-acetylglucosamine--N-acetylmuramyl-(pentapeptide) pyrophosphoryl-undecaprenol N-acetylglucosamine transferase from Wolbachia sp. subsp. Drosophila simulans (strain wRi).